Reading from the N-terminus, the 388-residue chain is Mannitol-1-phosphate 5-dehydrogenase (388 aa).

An NAD(+)-binding site is contributed by 5-16; sequence AIQFGGGNIGRG. Residue lysine 213 is part of the active site.

It belongs to the mannitol dehydrogenase family. Monomer.

It catalyses the reaction D-mannitol 1-phosphate + NAD(+) = beta-D-fructose 6-phosphate + NADH + H(+). Its function is as follows. Catalyzes the NAD(H)-dependent interconversion of D-fructose 6-phosphate and D-mannitol 1-phosphate in the mannitol metabolic pathway. In Aspergillus fumigatus (strain CBS 144.89 / FGSC A1163 / CEA10) (Neosartorya fumigata), this protein is Mannitol-1-phosphate 5-dehydrogenase (mpdA).